Here is a 337-residue protein sequence, read N- to C-terminus: Heme A synthase (337 aa).

The next 7 membrane-spanning stretches (helical) occupy residues 3–23 (LARW…IGGI), 94–114 (VIGL…MIPA), 120–140 (LLAL…MVAS), 154–174 (LSAH…TALD), 191–211 (GVAW…AWVA), 248–268 (FLLH…LVVL), and 289–309 (TMVV…IAVA). Residue His254 participates in heme binding. Residue His310 participates in heme binding. A helical membrane pass occupies residues 311–331 (QLTGALLVISTAWAAHAIGTA).

It belongs to the COX15/CtaA family. Type 2 subfamily. In terms of assembly, interacts with CtaB. Heme b serves as cofactor.

Its subcellular location is the cell membrane. The enzyme catalyses Fe(II)-heme o + 2 A + H2O = Fe(II)-heme a + 2 AH2. The protein operates within porphyrin-containing compound metabolism; heme A biosynthesis; heme A from heme O: step 1/1. Functionally, catalyzes the conversion of heme O to heme A by two successive hydroxylations of the methyl group at C8. The first hydroxylation forms heme I, the second hydroxylation results in an unstable dihydroxymethyl group, which spontaneously dehydrates, resulting in the formyl group of heme A. The protein is Heme A synthase of Erythrobacter litoralis (strain HTCC2594).